Here is a 66-residue protein sequence, read N- to C-terminus: Moricin-1 (66 aa).

The signal sequence occupies residues 1 to 24; sequence MNILKFFFVFIVAMSLVSCSTAAP.

Expressed in fat body and to a lesser extent in hemocyte and Malpighian tubules.

It is found in the secreted. In terms of biological role, has antibacterial activity against Gram-positive and Gram-negative bacteria. Probably acts by disturbing membrane functions with its amphipathic structure. The polypeptide is Moricin-1 (MOR1) (Bombyx mori (Silk moth)).